Consider the following 278-residue polypeptide: MASIDGLPPLREVIRAHGLSAKRQLGQNFLLDLNLTAKIARLAGDLTNSDVLEVGPGPGGLTRGLLAEGARRVLAIEKDARCLPALAEVAAAWPGRLEVLNADALEVDVAARLTPPIRIVANLPYNVGTELLTRWLSSDWPPFWESLTLMFQKEVAERIVAKPGSKAYGRLALLSQWRTDPKIVLTLPPDAFTPPPSIHSAVVHFTRLEAPRHPADPKVLARVTAMAFNQRRKMLRSSLKGLVPDIETVLREAGIEPTQRAEEIPLEGFCALARRLAG.

Residues Asn-28, Leu-30, Gly-55, Glu-77, Asp-103, and Asn-122 each coordinate S-adenosyl-L-methionine.

This sequence belongs to the class I-like SAM-binding methyltransferase superfamily. rRNA adenine N(6)-methyltransferase family. RsmA subfamily.

The protein resides in the cytoplasm. The catalysed reaction is adenosine(1518)/adenosine(1519) in 16S rRNA + 4 S-adenosyl-L-methionine = N(6)-dimethyladenosine(1518)/N(6)-dimethyladenosine(1519) in 16S rRNA + 4 S-adenosyl-L-homocysteine + 4 H(+). Its function is as follows. Specifically dimethylates two adjacent adenosines (A1518 and A1519) in the loop of a conserved hairpin near the 3'-end of 16S rRNA in the 30S particle. May play a critical role in biogenesis of 30S subunits. The sequence is that of Ribosomal RNA small subunit methyltransferase A from Cereibacter sphaeroides (strain ATCC 17029 / ATH 2.4.9) (Rhodobacter sphaeroides).